Consider the following 327-residue polypeptide: Ubiquinone biosynthesis protein COQ4, mitochondrial (327 aa).

4 residues coordinate Zn(2+): His208, Asp209, His212, and Glu224.

It belongs to the COQ4 family. Component of a multi-subunit COQ enzyme complex, composed of at least COQ3, COQ4, COQ5, COQ6, COQ7 and COQ9. Zn(2+) is required as a cofactor.

It is found in the mitochondrion inner membrane. The catalysed reaction is a 4-hydroxy-3-methoxy-5-(all-trans-polyprenyl)benzoate + H(+) = a 2-methoxy-6-(all-trans-polyprenyl)phenol + CO2. It functions in the pathway cofactor biosynthesis; ubiquinone biosynthesis. Functionally, lyase that catalyzes the C1-decarboxylation of 4-hydroxy-3-methoxy-5-(all-trans-polyprenyl)benzoic acid into 2-methoxy-6-(all-trans-polyprenyl)phenol during ubiquinone biosynthesis. The chain is Ubiquinone biosynthesis protein COQ4, mitochondrial from Lachancea thermotolerans (strain ATCC 56472 / CBS 6340 / NRRL Y-8284) (Yeast).